Here is a 73-residue protein sequence, read N- to C-terminus: RNA-binding protein Hfq (73 aa).

In terms of domain architecture, Sm spans 8-68; sequence DQFLNQIRKD…ISTFAPQKNV (61 aa).

It belongs to the Hfq family. In terms of assembly, homohexamer.

RNA chaperone that binds small regulatory RNA (sRNAs) and mRNAs to facilitate mRNA translational regulation in response to envelope stress, environmental stress and changes in metabolite concentrations. Also binds with high specificity to tRNAs. This is RNA-binding protein Hfq from Bacillus velezensis (strain DSM 23117 / BGSC 10A6 / LMG 26770 / FZB42) (Bacillus amyloliquefaciens subsp. plantarum).